Here is a 379-residue protein sequence, read N- to C-terminus: uncharacterized protein (379 aa).

It belongs to the glycosyltransferase 28 family.

This is an uncharacterized protein from Methanosarcina acetivorans (strain ATCC 35395 / DSM 2834 / JCM 12185 / C2A).